A 324-amino-acid polypeptide reads, in one-letter code: Thiazole synthase (324 aa).

Catalysis depends on Lys-167, which acts as the Schiff-base intermediate with DXP. 1-deoxy-D-xylulose 5-phosphate is bound by residues Gly-228, 254-255, and 276-277; these read AG and NT.

This sequence belongs to the ThiG family. Homotetramer. Forms heterodimers with either ThiH or ThiS.

It localises to the cytoplasm. The enzyme catalyses [ThiS sulfur-carrier protein]-C-terminal-Gly-aminoethanethioate + 2-iminoacetate + 1-deoxy-D-xylulose 5-phosphate = [ThiS sulfur-carrier protein]-C-terminal Gly-Gly + 2-[(2R,5Z)-2-carboxy-4-methylthiazol-5(2H)-ylidene]ethyl phosphate + 2 H2O + H(+). The protein operates within cofactor biosynthesis; thiamine diphosphate biosynthesis. In terms of biological role, catalyzes the rearrangement of 1-deoxy-D-xylulose 5-phosphate (DXP) to produce the thiazole phosphate moiety of thiamine. Sulfur is provided by the thiocarboxylate moiety of the carrier protein ThiS. In vitro, sulfur can be provided by H(2)S. This Paramagnetospirillum magneticum (strain ATCC 700264 / AMB-1) (Magnetospirillum magneticum) protein is Thiazole synthase.